The primary structure comprises 1048 residues: Copper-dependent transcription factor 1 (1048 aa).

Positions 1 to 40 (MVLINDKKFACEKCIKGHRVSACTHTDRPLFEVKKKGRPS) form a DNA-binding region, copper-fist. Cys11, Cys14, Cys23, and His25 together coordinate Zn(2+). Residues 85–99 (ANESGGASATANTSA) show a composition bias toward low complexity. Disordered regions lie at residues 85–117 (ANES…PTFP) and 178–273 (HSGH…RPPV). The segment covering 211–222 (TRNSPTSINSSE) has biased composition (polar residues). The CRM-I signature appears at 348–362 (CMCGDDCSCPGCATH). The short motif at 455–482 (CCGGKCGCPPGECACTKQCCGCCGECTC) is the CRM-II element. Disordered regions lie at residues 506–702 (SSCG…PLNS) and 835–876 (GPSG…WKFP). 5 stretches are compositionally biased toward polar residues: residues 527-536 (QIPQSVSPTS), 550-565 (PVST…SFNT), 629-645 (GSMT…GVRR), 664-682 (SIQS…SNQI), and 692-702 (APSQMTAPLNS). Residues 835-845 (GPSGPSAIPAT) are compositionally biased toward low complexity. Over residues 846 to 868 (NIPSRHTTPQASRPLTPPESSFT) the composition is skewed to polar residues.

The protein resides in the nucleus. It localises to the cytoplasm. It is found in the cell cortex. Its function is as follows. Transcription factor that regulates copper acquisition and homeostasis, and which plays a central role in fungal pathogenesis during neurologic infection. The transcriptional regulation exerted by CUF1 is intrinsically complex since it acts as a dual sensor of copper levels, responsible for expression of a set of copper-specific copper transporters, CTR1 and CTR4, at low copper concentrations, and 2 metallothioneins, CMT1 and CMT2, at high copper concentrations. Positively regulates the expression of the copper acquisition factor BIM1 under copper-limiting conditions. Also positively regulates the expression of super oxide dismutase SOD2 isoform 2 during oxidative stress and copper-limiting conditions. Negatively regulates the expression of super oxide dismutase SOD1 during copper-limiting conditions. Also regulates ATM1, an ABC transporter with functions in the iron-sulfur clusters (ISC) export machinery, during copper stress. Another target of CUF1 is the gene encoding the laccase LAC1. Binds promoters of target genes at Cu-responsive elements (CuREs) that contain a variable A/T rich 5' region followed by the core consensus sequence 5'-G(G/C)CTC(A/G)-3'. Negatively regulates capsule biosynthesis, probably via modulating iron acquisition through the high-affinity iron uptake pathway. In Cryptococcus neoformans var. grubii serotype A (strain H99 / ATCC 208821 / CBS 10515 / FGSC 9487) (Filobasidiella neoformans var. grubii), this protein is Copper-dependent transcription factor 1.